An 86-amino-acid chain; its full sequence is CLAVATA3/ESR (CLE)-related protein 8 (86 aa).

The N-terminal stretch at 1–24 is a signal peptide; it reads MKVLKRDSMLLLITLYFLLTTSMA. The segment at 43-86 is disordered; that stretch reads DLKQNKAKPHLPNLFRTMRRVPTGPNPLHHISPPQPGSLNYARN. Hydroxyproline is present on residues Pro64 and Pro67. An O-linked (Ara...) hydroxyproline glycan is attached at Pro67.

The protein belongs to the CLV3/ESR signal peptide family. Post-translationally, the O-glycosylation (arabinosylation) of the hydroxyproline Pro-67 enhances binding affinity of the CLE8p peptide for its receptor. Mostly expressed in siliques, and, to a lower extent, in flowers. Expressed in young embryos and endosperm.

It is found in the secreted. Its subcellular location is the extracellular space. Its function is as follows. Extracellular signal peptide that regulates cell fate. Represses root apical meristem maintenance. Positively regulates the expression of the transcription factor WOX8 and thus, regulates early embryo development. Regulates the transition of protophloem cells from proliferation to differentiation, thus impinging on postembryonic growth capacity of the root meristem; this signaling pathway requires CRN and CLV2. This is CLAVATA3/ESR (CLE)-related protein 8 from Arabidopsis thaliana (Mouse-ear cress).